The primary structure comprises 335 residues: Transmembrane protein 120B-A (335 aa).

Residues 1–40 (MSLQKCQEEWSEIEKEFQQLQETHKVYKQKLEELNSLQNL) adopt a coiled-coil conformation. 6 helical membrane passes run 100 to 122 (GLYL…AKFA), 130 to 150 (FKLY…FVLN), 157 to 177 (VFNF…SILI), 193 to 213 (VSTF…YQIF), 268 to 288 (FLLP…ITLF), and 300 to 320 (QVFV…LTTL).

The protein belongs to the TMEM120 family.

It is found in the nucleus inner membrane. Necessary for efficient adipogenesis. Does not show ion channel activity. This is Transmembrane protein 120B-A (tmem120b-a) from Xenopus laevis (African clawed frog).